Reading from the N-terminus, the 245-residue chain is Biosynthetic peptidoglycan transglycosylase (245 aa).

The chain crosses the membrane as a helical span at residues 13–35 (VGLARWIVYAGSVFAGAWLATQL).

The protein belongs to the glycosyltransferase 51 family.

The protein resides in the cell inner membrane. It catalyses the reaction [GlcNAc-(1-&gt;4)-Mur2Ac(oyl-L-Ala-gamma-D-Glu-L-Lys-D-Ala-D-Ala)](n)-di-trans,octa-cis-undecaprenyl diphosphate + beta-D-GlcNAc-(1-&gt;4)-Mur2Ac(oyl-L-Ala-gamma-D-Glu-L-Lys-D-Ala-D-Ala)-di-trans,octa-cis-undecaprenyl diphosphate = [GlcNAc-(1-&gt;4)-Mur2Ac(oyl-L-Ala-gamma-D-Glu-L-Lys-D-Ala-D-Ala)](n+1)-di-trans,octa-cis-undecaprenyl diphosphate + di-trans,octa-cis-undecaprenyl diphosphate + H(+). It functions in the pathway cell wall biogenesis; peptidoglycan biosynthesis. Functionally, peptidoglycan polymerase that catalyzes glycan chain elongation from lipid-linked precursors. This chain is Biosynthetic peptidoglycan transglycosylase, found in Burkholderia vietnamiensis (strain G4 / LMG 22486) (Burkholderia cepacia (strain R1808)).